Reading from the N-terminus, the 425-residue chain is UPF0597 protein VF_0641 (425 aa).

Belongs to the UPF0597 family.

The sequence is that of UPF0597 protein VF_0641 from Aliivibrio fischeri (strain ATCC 700601 / ES114) (Vibrio fischeri).